The following is an 89-amino-acid chain: MSLSVEAKAKIVSEFGRGENDSGSTEVQVALLTAQINHLQGHFAEHKKDHHSRRGLLRMVSQRRKLLDYLKRKDVARYSALIERLGLRR.

Belongs to the universal ribosomal protein uS15 family. As to quaternary structure, part of the 30S ribosomal subunit. Forms a bridge to the 50S subunit in the 70S ribosome, contacting the 23S rRNA.

Functionally, one of the primary rRNA binding proteins, it binds directly to 16S rRNA where it helps nucleate assembly of the platform of the 30S subunit by binding and bridging several RNA helices of the 16S rRNA. Its function is as follows. Forms an intersubunit bridge (bridge B4) with the 23S rRNA of the 50S subunit in the ribosome. The chain is Small ribosomal subunit protein uS15 from Klebsiella pneumoniae subsp. pneumoniae (strain ATCC 700721 / MGH 78578).